The sequence spans 170 residues: Large ribosomal subunit protein uL10 (170 aa).

It belongs to the universal ribosomal protein uL10 family. In terms of assembly, part of the ribosomal stalk of the 50S ribosomal subunit. The N-terminus interacts with L11 and the large rRNA to form the base of the stalk. The C-terminus forms an elongated spine to which L12 dimers bind in a sequential fashion forming a multimeric L10(L12)X complex.

Functionally, forms part of the ribosomal stalk, playing a central role in the interaction of the ribosome with GTP-bound translation factors. The sequence is that of Large ribosomal subunit protein uL10 (rplJ) from Chlamydia pneumoniae (Chlamydophila pneumoniae).